The sequence spans 355 residues: 3-dehydroquinate synthase (355 aa).

Residues 105–109, 129–130, K142, K151, and 169–172 contribute to the NAD(+) site; these read GVVGD, TS, and TLKT. Zn(2+) contacts are provided by E184, H246, and H263.

This sequence belongs to the sugar phosphate cyclases superfamily. Dehydroquinate synthase family. NAD(+) is required as a cofactor. Requires Co(2+) as cofactor. The cofactor is Zn(2+).

Its subcellular location is the cytoplasm. The enzyme catalyses 7-phospho-2-dehydro-3-deoxy-D-arabino-heptonate = 3-dehydroquinate + phosphate. The protein operates within metabolic intermediate biosynthesis; chorismate biosynthesis; chorismate from D-erythrose 4-phosphate and phosphoenolpyruvate: step 2/7. Catalyzes the conversion of 3-deoxy-D-arabino-heptulosonate 7-phosphate (DAHP) to dehydroquinate (DHQ). This is 3-dehydroquinate synthase from Streptococcus agalactiae serotype V (strain ATCC BAA-611 / 2603 V/R).